Here is a 151-residue protein sequence, read N- to C-terminus: Large ribosomal subunit protein uL16 (151 aa).

It belongs to the universal ribosomal protein uL16 family. In terms of assembly, part of the 50S ribosomal subunit.

In terms of biological role, binds 23S rRNA and is also seen to make contacts with the A and possibly P site tRNAs. This chain is Large ribosomal subunit protein uL16, found in Chloroflexus aurantiacus (strain ATCC 29364 / DSM 637 / Y-400-fl).